Consider the following 438-residue polypeptide: Keratin, type I cytoskeletal 13 (438 aa).

A head region spans residues Met-1–Asn-95. 2 positions are modified to omega-N-methylarginine: Arg-27 and Arg-35. The coil stretch occupies residues Glu-96 to Trp-131. Residues Glu-96–Met-408 form the IF rod domain. A linker 1 region spans residues His-132 to Thr-150. Residues Ile-151 to Phe-242 form a coil 1B region. The tract at residues Ser-243 to Val-265 is linker 12. The tract at residues Leu-266 to Gln-404 is coil 2. The interval Asp-405 to Tyr-438 is tail. The tract at residues Met-408–Tyr-438 is disordered. The span at Thr-409–Gly-431 shows a compositional bias: low complexity.

It belongs to the intermediate filament family. As to quaternary structure, heterotetramer of two type I and two type II keratins. O-glycosylated; glycans consist of single N-acetylglucosamine residues.

Type 1 keratin. Maintains postnatal tongue mucosal cell homeostasis and tissue organization in response to mechanical stress, potentially via regulation of the G1/S phase cyclins CCNE1 and CCNE2. The polypeptide is Keratin, type I cytoskeletal 13 (Rattus norvegicus (Rat)).